A 589-amino-acid polypeptide reads, in one-letter code: Probable galacturonosyltransferase 6 (589 aa).

Residues 1–6 (MKQIRR) are Cytoplasmic-facing. The helical; Signal-anchor for type II membrane protein transmembrane segment at 7–27 (WQRILILALLSISVFAPLIFV) threads the bilayer. Residues 28–589 (SNRLKSITPV…TYLQQCNLQA (562 aa)) are Lumenal-facing. N-linked (GlcNAc...) asparagine glycans are attached at residues asparagine 83 and asparagine 126. The segment at 127–151 (KTDFKPPLSKGEKNTRVQPDRATDV) is disordered. The segment covering 136 to 151 (KGEKNTRVQPDRATDV) has biased composition (basic and acidic residues). N-linked (GlcNAc...) asparagine glycans are attached at residues asparagine 317 and asparagine 454.

This sequence belongs to the glycosyltransferase 8 family. As to expression, expressed in roots, inflorescences, siliques, leaves and stems.

The protein localises to the golgi apparatus membrane. It participates in glycan metabolism; pectin biosynthesis. Its function is as follows. Probably involved in pectin biosynthesis in cell walls. This is Probable galacturonosyltransferase 6 (GAUT6) from Arabidopsis thaliana (Mouse-ear cress).